Here is a 180-residue protein sequence, read N- to C-terminus: Endogenous alpha-amylase/subtilisin inhibitor (180 aa).

2 disulfide bridges follow: C42–C89 and C143–C147.

This sequence belongs to the protease inhibitor I3 (leguminous Kunitz-type inhibitor) family.

Inhibitor of endogenous alpha-amylase (wheat also produces an exogenous inhibitor which inactivates alpha-amylase from animal and insect origin). This inhibitor can also inhibit subtilisin. This chain is Endogenous alpha-amylase/subtilisin inhibitor, found in Triticum aestivum (Wheat).